The primary structure comprises 783 residues: Cadherin-5 (783 aa).

An N-terminal signal peptide occupies residues 1–25 (MQALVMLLATGATYYLGLLAAAAAA). A propeptide spanning residues 26–45 (VNPGRPNTPGSLPAHRRQKR) is cleaved from the precursor. Cadherin domains follow at residues 44–149 (KRDW…WPVF), 150–256 (THRV…FPIF), 257–371 (TQNR…PPIF), 372–478 (QQPF…APEF), and 478–585 (FAKP…GEFT). At 46-599 (DWIWNQMHID…AAAQVGISIQ (554 aa)) the chain is on the extracellular side. Residues glutamate 56 and glutamate 57 each coordinate Ca(2+). N-linked (GlcNAc...) asparagine glycosylation occurs at asparagine 59. Residues aspartate 107, glutamate 109, aspartate 141, valine 142, asparagine 143, aspartate 144, and asparagine 145 each contribute to the Ca(2+) site. A glycan (N-linked (GlcNAc...) asparagine) is linked at asparagine 155. Positions 175, 177, 184, and 229 each coordinate Ca(2+). Residues asparagine 361, asparagine 441, and asparagine 523 are each glycosylated (N-linked (GlcNAc...) asparagine). The chain crosses the membrane as a helical span at residues 600-620 (ALVAIFLCILTFTVITLLIIL). Positions 621–660 (RRRLRKQARAHGKSVPEIHEQLVTYDEEGGGEMDTTSYDV) are required for interaction with PALS1. Residues 621-783 (RRRLRKQARA…GSDPQEELVY (163 aa)) lie on the Cytoplasmic side of the membrane.

In terms of assembly, part of a complex composed of AMOTL2, MAGI1 and CDH5, within the complex AMOTL2 acts as a scaffold protein for the interaction of MAGI1 with CDH5. The complex is required for coupling actin fibers to cell junctions in endothelial cells. Within the complex AMOTL2 (via its N-terminus) interacts with CDH5. Interacts (via cadherin 5 domain) with PTPRB. Interacts with TRPC4. Interacts with KRIT1. Interacts with PARD3. Interacts with RTN4 (isoform B). Interacts with PALS1; the interaction promotes PALS1 localization to cell junctions and is required for CDH5-mediated vascular lumen formation and endothelial cell. Interacts with CTNND1/p120-catenin; the interaction controls CADH5 endocytosis. Post-translationally, phosphorylated on tyrosine residues by KDR/VEGFR-2. Dephosphorylated by PTPRB. O-glycosylated.

The protein resides in the cell junction. Its subcellular location is the adherens junction. The protein localises to the cell membrane. It is found in the cytoplasm. Its function is as follows. Cadherins are calcium-dependent cell adhesion proteins. They preferentially interact with themselves in a homophilic manner in connecting cells; cadherins may thus contribute to the sorting of heterogeneous cell types. This cadherin may play a important role in endothelial cell biology through control of the cohesion and organization of the intercellular junctions. It associates with alpha-catenin forming a link to the cytoskeleton. Plays a role in coupling actin fibers to cell junctions in endothelial cells, via acting as a cell junctional complex anchor for AMOTL2 and MAGI1. Acts in concert with KRIT1 and PALS1 to establish and maintain correct endothelial cell polarity and vascular lumen. These effects are mediated by recruitment and activation of the Par polarity complex and RAP1B. Required for activation of PRKCZ and for localization of phosphorylated PRKCZ, PARD3, TIAM1 and RAP1B to the cell junction. Associates with CTNND1/p120-catenin to control CADH5 endocytosis. The sequence is that of Cadherin-5 from Bos taurus (Bovine).